The sequence spans 165 residues: Cyclic pyranopterin monophosphate synthase (165 aa).

Residues 75-77 (MCH) and 115-116 (ME) contribute to the substrate site. D130 is an active-site residue.

Belongs to the MoaC family. Homohexamer; trimer of dimers.

The catalysed reaction is (8S)-3',8-cyclo-7,8-dihydroguanosine 5'-triphosphate = cyclic pyranopterin phosphate + diphosphate. The protein operates within cofactor biosynthesis; molybdopterin biosynthesis. Functionally, catalyzes the conversion of (8S)-3',8-cyclo-7,8-dihydroguanosine 5'-triphosphate to cyclic pyranopterin monophosphate (cPMP). This chain is Cyclic pyranopterin monophosphate synthase, found in Halalkalibacterium halodurans (strain ATCC BAA-125 / DSM 18197 / FERM 7344 / JCM 9153 / C-125) (Bacillus halodurans).